The primary structure comprises 631 residues: Phosphomethylpyrimidine synthase (631 aa).

Substrate-binding positions include N239, M268, Y297, H333, 353–355 (SRG), 394–397 (DGLR), and E433. H437 is a binding site for Zn(2+). Y460 contacts substrate. Position 501 (H501) interacts with Zn(2+). Residues C581, C584, and C589 each coordinate [4Fe-4S] cluster.

This sequence belongs to the ThiC family. Homodimer. It depends on [4Fe-4S] cluster as a cofactor.

It carries out the reaction 5-amino-1-(5-phospho-beta-D-ribosyl)imidazole + S-adenosyl-L-methionine = 4-amino-2-methyl-5-(phosphooxymethyl)pyrimidine + CO + 5'-deoxyadenosine + formate + L-methionine + 3 H(+). It functions in the pathway cofactor biosynthesis; thiamine diphosphate biosynthesis. Functionally, catalyzes the synthesis of the hydroxymethylpyrimidine phosphate (HMP-P) moiety of thiamine from aminoimidazole ribotide (AIR) in a radical S-adenosyl-L-methionine (SAM)-dependent reaction. The polypeptide is Phosphomethylpyrimidine synthase (Salmonella paratyphi A (strain AKU_12601)).